Consider the following 102-residue polypeptide: Small ribosomal subunit protein uS10 (102 aa).

The protein belongs to the universal ribosomal protein uS10 family. Part of the 30S ribosomal subunit.

Its function is as follows. Involved in the binding of tRNA to the ribosomes. In Geobacter sulfurreducens (strain ATCC 51573 / DSM 12127 / PCA), this protein is Small ribosomal subunit protein uS10.